The primary structure comprises 160 residues: Major pollen allergen Bet v 1-G (160 aa).

Brassinolide contacts are provided by lysine 55, tyrosine 82, tyrosine 84, and asparagine 101.

It belongs to the BetVI family.

It localises to the cytoplasm. In terms of biological role, may be a general steroid carrier protein. The sequence is that of Major pollen allergen Bet v 1-G (BETV1G) from Betula pendula (European white birch).